The primary structure comprises 207 residues: Guanylate kinase (207 aa).

The region spanning 6 to 185 is the Guanylate kinase-like domain; it reads GLLIVLSGPS…AKNRIQSIVE (180 aa). 13–20 contacts ATP; the sequence is GPSGVGKG.

The protein belongs to the guanylate kinase family.

The protein localises to the cytoplasm. The catalysed reaction is GMP + ATP = GDP + ADP. Its function is as follows. Essential for recycling GMP and indirectly, cGMP. The sequence is that of Guanylate kinase from Staphylococcus epidermidis (strain ATCC 12228 / FDA PCI 1200).